The chain runs to 1101 residues: Rho GTPase-activating protein 30 (1101 aa).

Positions 20–215 constitute a Rho-GAP domain; the sequence is CDLREHLQHS…FILTHVDQLF (196 aa). Disordered regions lie at residues 305–397 and 450–499; these read RKLP…VRAL and LQPR…LEDS. Residues 309–319 show a composition bias toward basic and acidic residues; that stretch reads LRVEDREEKSS. Low complexity predominate over residues 348–367; the sequence is SSSSQPSSLMPESLESNSME. The span at 451 to 465 shows a compositional bias: pro residues; the sequence is QPRPSPALGPGPPGS. Position 578 is a phosphoserine (Ser578). The tract at residues 622–848 is disordered; the sequence is LGPKPINWEG…EQKSIDVETE (227 aa). Basic and acidic residues-rich tracts occupy residues 659–677, 686–762, 786–821, and 829–844; these read TRQE…REEA, EAGK…KGDD, EVVH…HSED, and DDRK…KSID. A Phosphoserine modification is found at Ser875. Disordered regions lie at residues 878 to 901 and 968 to 987; these read EINE…GMEA and CPRP…GSRA. Residue Ser996 is modified to Phosphoserine. The interval 1044 to 1076 is disordered; the sequence is SRPLSCLERPPEGTEGSEPRSRLSLPPRELHPV. The span at 1052-1064 shows a compositional bias: basic and acidic residues; sequence RPPEGTEGSEPRS.

Interacts with RHOU in a GTP-independent manner.

The protein localises to the cytoplasmic vesicle. In terms of biological role, GTPase-activating protein (GAP) for RAC1 and RHOA, but not for CDC42. In Mus musculus (Mouse), this protein is Rho GTPase-activating protein 30 (Arhgap30).